Here is a 306-residue protein sequence, read N- to C-terminus: Non-specific ribonucleoside hydrolase RihC (306 aa).

His235 is a catalytic residue.

The protein belongs to the IUNH family. RihC subfamily.

Functionally, hydrolyzes both purine and pyrimidine ribonucleosides with a broad-substrate specificity. In Salmonella paratyphi B (strain ATCC BAA-1250 / SPB7), this protein is Non-specific ribonucleoside hydrolase RihC.